A 282-amino-acid polypeptide reads, in one-letter code: NADPH-dependent 7-cyano-7-deazaguanine reductase (282 aa).

88 to 90 (IES) is a binding site for substrate. An NADPH-binding site is contributed by 90–91 (SK). The active-site Thioimide intermediate is Cys-190. Asp-197 serves as the catalytic Proton donor. 229–230 (HE) lines the substrate pocket. Position 258-259 (258-259 (RG)) interacts with NADPH.

It belongs to the GTP cyclohydrolase I family. QueF type 2 subfamily. In terms of assembly, homodimer.

The protein localises to the cytoplasm. It catalyses the reaction 7-aminomethyl-7-carbaguanine + 2 NADP(+) = 7-cyano-7-deazaguanine + 2 NADPH + 3 H(+). It functions in the pathway tRNA modification; tRNA-queuosine biosynthesis. In terms of biological role, catalyzes the NADPH-dependent reduction of 7-cyano-7-deazaguanine (preQ0) to 7-aminomethyl-7-deazaguanine (preQ1). The polypeptide is NADPH-dependent 7-cyano-7-deazaguanine reductase (Salmonella schwarzengrund (strain CVM19633)).